A 646-amino-acid polypeptide reads, in one-letter code: Chaperone protein DnaK (646 aa).

Thr-198 is modified (phosphothreonine; by autocatalysis). Positions Glu-603–Lys-646 are disordered. The segment covering Ala-618–Gln-627 has biased composition (low complexity).

Belongs to the heat shock protein 70 family.

In terms of biological role, acts as a chaperone. The sequence is that of Chaperone protein DnaK from Acinetobacter baumannii (strain ACICU).